The following is a 457-amino-acid chain: Argininosuccinate lyase (457 aa).

This sequence belongs to the lyase 1 family. Argininosuccinate lyase subfamily.

The protein resides in the cytoplasm. The catalysed reaction is 2-(N(omega)-L-arginino)succinate = fumarate + L-arginine. It functions in the pathway amino-acid biosynthesis; L-arginine biosynthesis; L-arginine from L-ornithine and carbamoyl phosphate: step 3/3. This Escherichia fergusonii (strain ATCC 35469 / DSM 13698 / CCUG 18766 / IAM 14443 / JCM 21226 / LMG 7866 / NBRC 102419 / NCTC 12128 / CDC 0568-73) protein is Argininosuccinate lyase.